The primary structure comprises 108 residues: Class I hydrophobin 3 (108 aa).

The first 17 residues, 1–17 (MFSRVFAVASLAALALA), serve as a signal peptide directing secretion. Disulfide bonds link cysteine 26–cysteine 87, cysteine 33–cysteine 81, cysteine 34–cysteine 67, and cysteine 88–cysteine 101.

Belongs to the fungal hydrophobin family. In terms of assembly, self-assembles to form functional amyloid fibrils called rodlets. Self-assembly into fibrillar rodlets occurs spontaneously at hydrophobic:hydrophilic interfaces and the rodlets further associate laterally to form amphipathic monolayers.

It localises to the secreted. The protein localises to the cell wall. Its function is as follows. Aerial growth, conidiation, and dispersal of filamentous fungi in the environment rely upon a capability of their secreting small amphipathic proteins called hydrophobins (HPBs) with low sequence identity. Class I can self-assemble into an outermost layer of rodlet bundles on aerial cell surfaces, conferring cellular hydrophobicity that supports fungal growth, development and dispersal; whereas Class II form highly ordered films at water-air interfaces through intermolecular interactions but contribute nothing to the rodlet structure. The sequence is that of Class I hydrophobin 3 from Pisolithus tinctorius (Dead man's foot).